Reading from the N-terminus, the 129-residue chain is MASRLLRGAGALAAQTLRARGPNGVAVVRSMASGGGVPTDEEQATGLEREVMMAARKGLDPYNILAPKAASGTKEDPNLVPSITNKRIVGCICEEDNSTVIWFWVHKGETQRCPSCGTHYKLVSHQLAH.

A mitochondrion-targeting transit peptide spans 1–31; that stretch reads MASRLLRGAGALAAQTLRARGPNGVAVVRSM. N6-acetyllysine is present on residues lysine 68 and lysine 86. The Zn(2+) site is built by cysteine 91, cysteine 93, cysteine 113, and cysteine 116. Residue lysine 121 is modified to N6-acetyllysine.

Belongs to the cytochrome c oxidase subunit 5B family. In terms of assembly, component of the cytochrome c oxidase (complex IV, CIV), a multisubunit enzyme composed of 14 subunits. The complex is composed of a catalytic core of 3 subunits MT-CO1, MT-CO2 and MT-CO3, encoded in the mitochondrial DNA, and 11 supernumerary subunits COX4I, COX5A, COX5B, COX6A, COX6B, COX6C, COX7A, COX7B, COX7C, COX8 and NDUFA4, which are encoded in the nuclear genome. The complex exists as a monomer or a dimer and forms supercomplexes (SCs) in the inner mitochondrial membrane with NADH-ubiquinone oxidoreductase (complex I, CI) and ubiquinol-cytochrome c oxidoreductase (cytochrome b-c1 complex, complex III, CIII), resulting in different assemblies (supercomplex SCI(1)III(2)IV(1) and megacomplex MCI(2)III(2)IV(2)).

Its subcellular location is the mitochondrion inner membrane. Its pathway is energy metabolism; oxidative phosphorylation. Its function is as follows. Component of the cytochrome c oxidase, the last enzyme in the mitochondrial electron transport chain which drives oxidative phosphorylation. The respiratory chain contains 3 multisubunit complexes succinate dehydrogenase (complex II, CII), ubiquinol-cytochrome c oxidoreductase (cytochrome b-c1 complex, complex III, CIII) and cytochrome c oxidase (complex IV, CIV), that cooperate to transfer electrons derived from NADH and succinate to molecular oxygen, creating an electrochemical gradient over the inner membrane that drives transmembrane transport and the ATP synthase. Cytochrome c oxidase is the component of the respiratory chain that catalyzes the reduction of oxygen to water. Electrons originating from reduced cytochrome c in the intermembrane space (IMS) are transferred via the dinuclear copper A center (CU(A)) of subunit 2 and heme A of subunit 1 to the active site in subunit 1, a binuclear center (BNC) formed by heme A3 and copper B (CU(B)). The BNC reduces molecular oxygen to 2 water molecules using 4 electrons from cytochrome c in the IMS and 4 protons from the mitochondrial matrix. This chain is Cytochrome c oxidase subunit 5B, mitochondrial (COX5B), found in Sus scrofa (Pig).